A 338-amino-acid chain; its full sequence is Ferrochelatase (338 aa).

Histidine 189 and glutamate 294 together coordinate Fe cation.

It belongs to the ferrochelatase family.

Its subcellular location is the cytoplasm. The catalysed reaction is heme b + 2 H(+) = protoporphyrin IX + Fe(2+). Its pathway is porphyrin-containing compound metabolism; protoheme biosynthesis; protoheme from protoporphyrin-IX: step 1/1. Functionally, catalyzes the ferrous insertion into protoporphyrin IX. The protein is Ferrochelatase of Pseudomonas putida (strain ATCC 47054 / DSM 6125 / CFBP 8728 / NCIMB 11950 / KT2440).